A 311-amino-acid chain; its full sequence is Methionyl-tRNA formyltransferase (311 aa).

110–113 contacts (6S)-5,6,7,8-tetrahydrofolate; that stretch reads SLLP.

This sequence belongs to the Fmt family.

The enzyme catalyses L-methionyl-tRNA(fMet) + (6R)-10-formyltetrahydrofolate = N-formyl-L-methionyl-tRNA(fMet) + (6S)-5,6,7,8-tetrahydrofolate + H(+). Functionally, attaches a formyl group to the free amino group of methionyl-tRNA(fMet). The formyl group appears to play a dual role in the initiator identity of N-formylmethionyl-tRNA by promoting its recognition by IF2 and preventing the misappropriation of this tRNA by the elongation apparatus. This chain is Methionyl-tRNA formyltransferase, found in Streptococcus equi subsp. zooepidemicus (strain H70).